The sequence spans 120 residues: NAD(P)H-quinone oxidoreductase subunit 3 (120 aa).

A run of 3 helical transmembrane segments spans residues 10–30 (FLGF…TNLI), 64–84 (MFAL…PWAV), and 89–109 (LGLL…IALA).

The protein belongs to the complex I subunit 3 family. As to quaternary structure, NDH-1 can be composed of about 15 different subunits; different subcomplexes with different compositions have been identified which probably have different functions.

It localises to the cellular thylakoid membrane. It catalyses the reaction a plastoquinone + NADH + (n+1) H(+)(in) = a plastoquinol + NAD(+) + n H(+)(out). The enzyme catalyses a plastoquinone + NADPH + (n+1) H(+)(in) = a plastoquinol + NADP(+) + n H(+)(out). NDH-1 shuttles electrons from an unknown electron donor, via FMN and iron-sulfur (Fe-S) centers, to quinones in the respiratory and/or the photosynthetic chain. The immediate electron acceptor for the enzyme in this species is believed to be plastoquinone. Couples the redox reaction to proton translocation, and thus conserves the redox energy in a proton gradient. Cyanobacterial NDH-1 also plays a role in inorganic carbon-concentration. The protein is NAD(P)H-quinone oxidoreductase subunit 3 of Prochlorococcus marinus (strain MIT 9301).